A 316-amino-acid chain; its full sequence is 4-hydroxy-3-methylbut-2-enyl diphosphate reductase (316 aa).

Cysteine 12 serves as a coordination point for [4Fe-4S] cluster. Residues histidine 43 and histidine 81 each coordinate (2E)-4-hydroxy-3-methylbut-2-enyl diphosphate. Histidine 43 and histidine 81 together coordinate dimethylallyl diphosphate. Isopentenyl diphosphate is bound by residues histidine 43 and histidine 81. Residue cysteine 103 participates in [4Fe-4S] cluster binding. A (2E)-4-hydroxy-3-methylbut-2-enyl diphosphate-binding site is contributed by histidine 131. Histidine 131 serves as a coordination point for dimethylallyl diphosphate. Histidine 131 is a binding site for isopentenyl diphosphate. Glutamate 133 acts as the Proton donor in catalysis. Threonine 170 serves as a coordination point for (2E)-4-hydroxy-3-methylbut-2-enyl diphosphate. Cysteine 198 lines the [4Fe-4S] cluster pocket. Serine 226, asparagine 228, and serine 271 together coordinate (2E)-4-hydroxy-3-methylbut-2-enyl diphosphate. 3 residues coordinate dimethylallyl diphosphate: serine 226, asparagine 228, and serine 271. Positions 226, 228, and 271 each coordinate isopentenyl diphosphate.

This sequence belongs to the IspH family. Requires [4Fe-4S] cluster as cofactor.

It catalyses the reaction isopentenyl diphosphate + 2 oxidized [2Fe-2S]-[ferredoxin] + H2O = (2E)-4-hydroxy-3-methylbut-2-enyl diphosphate + 2 reduced [2Fe-2S]-[ferredoxin] + 2 H(+). The catalysed reaction is dimethylallyl diphosphate + 2 oxidized [2Fe-2S]-[ferredoxin] + H2O = (2E)-4-hydroxy-3-methylbut-2-enyl diphosphate + 2 reduced [2Fe-2S]-[ferredoxin] + 2 H(+). Its pathway is isoprenoid biosynthesis; dimethylallyl diphosphate biosynthesis; dimethylallyl diphosphate from (2E)-4-hydroxy-3-methylbutenyl diphosphate: step 1/1. It functions in the pathway isoprenoid biosynthesis; isopentenyl diphosphate biosynthesis via DXP pathway; isopentenyl diphosphate from 1-deoxy-D-xylulose 5-phosphate: step 6/6. Functionally, catalyzes the conversion of 1-hydroxy-2-methyl-2-(E)-butenyl 4-diphosphate (HMBPP) into a mixture of isopentenyl diphosphate (IPP) and dimethylallyl diphosphate (DMAPP). Acts in the terminal step of the DOXP/MEP pathway for isoprenoid precursor biosynthesis. This Bacillus cereus (strain B4264) protein is 4-hydroxy-3-methylbut-2-enyl diphosphate reductase.